An 857-amino-acid polypeptide reads, in one-letter code: Leucine--tRNA ligase (857 aa).

A 'HIGH' region motif is present at residues 42-52; it reads PYPSGRLHMGH. The 'KMSKS' region motif lies at 617-621; sequence KMSKS. An ATP-binding site is contributed by lysine 620.

Belongs to the class-I aminoacyl-tRNA synthetase family.

It is found in the cytoplasm. It catalyses the reaction tRNA(Leu) + L-leucine + ATP = L-leucyl-tRNA(Leu) + AMP + diphosphate. The chain is Leucine--tRNA ligase from Vibrio parahaemolyticus serotype O3:K6 (strain RIMD 2210633).